Here is a 390-residue protein sequence, read N- to C-terminus: UPF0229 protein Cbei_0567 (390 aa).

The interval 77 to 108 is disordered; the sequence is SGVGNEKRGEKLGNGNKKLAKGNQGAGNEEGD. Over residues 89-103 the composition is skewed to low complexity; it reads GNGNKKLAKGNQGAG.

It belongs to the UPF0229 family.

This chain is UPF0229 protein Cbei_0567, found in Clostridium beijerinckii (strain ATCC 51743 / NCIMB 8052) (Clostridium acetobutylicum).